A 246-amino-acid chain; its full sequence is Sensory transduction protein LytT (246 aa).

The Response regulatory domain occupies 4 to 120; that stretch reads HIMIAEDERL…RFKIAMNRIR (117 aa). At aspartate 55 the chain carries 4-aspartylphosphate. In terms of domain architecture, HTH LytTR-type spans 136-243; the sequence is LVVNLDEKMM…AKGLFDALQG (108 aa).

In terms of processing, phosphorylated by LytS.

Its subcellular location is the cytoplasm. In terms of biological role, member of the two-component regulatory system LytS/LytT that probably regulates genes involved in cell wall metabolism. The polypeptide is Sensory transduction protein LytT (lytT) (Oceanobacillus iheyensis (strain DSM 14371 / CIP 107618 / JCM 11309 / KCTC 3954 / HTE831)).